Here is a 92-residue protein sequence, read N- to C-terminus: FMRFamide-like neuropeptides 16 (92 aa).

The N-terminal stretch at 1 to 24 (MNFSGFEFSSIVAFFLLILQLSTA) is a signal peptide. Positions 25–55 (AVLPADYAYGVADEMSALPDSGSLFAEQRPS) are excised as a propeptide. Phenylalanine amide is present on residues phenylalanine 64, phenylalanine 74, and phenylalanine 84. Residues 87–92 (SAPFEQ) constitute a propeptide that is removed on maturation.

Belongs to the FARP (FMRFamide related peptide) family. As to expression, each flp gene is expressed in a distinct set of neurons.

The protein resides in the secreted. Functionally, FMRFamides and FMRFamide-like peptides are neuropeptides. AQTFVRF-amide inhibits the activity of dissected pharyngeal myogenic muscle system. This is FMRFamide-like neuropeptides 16 from Caenorhabditis elegans.